The following is a 101-amino-acid chain: NAD(P)H-quinone oxidoreductase subunit 4L, chloroplastic (101 aa).

The next 3 helical transmembrane spans lie at 2-22, 32-52, and 61-81; these read ILEH…YGLI, MCLE…SDFF, and IFSI…LAIV.

The protein belongs to the complex I subunit 4L family. NDH is composed of at least 16 different subunits, 5 of which are encoded in the nucleus.

Its subcellular location is the plastid. It is found in the chloroplast thylakoid membrane. It catalyses the reaction a plastoquinone + NADH + (n+1) H(+)(in) = a plastoquinol + NAD(+) + n H(+)(out). The enzyme catalyses a plastoquinone + NADPH + (n+1) H(+)(in) = a plastoquinol + NADP(+) + n H(+)(out). Its function is as follows. NDH shuttles electrons from NAD(P)H:plastoquinone, via FMN and iron-sulfur (Fe-S) centers, to quinones in the photosynthetic chain and possibly in a chloroplast respiratory chain. The immediate electron acceptor for the enzyme in this species is believed to be plastoquinone. Couples the redox reaction to proton translocation, and thus conserves the redox energy in a proton gradient. The sequence is that of NAD(P)H-quinone oxidoreductase subunit 4L, chloroplastic from Oenothera argillicola (Appalachian evening primrose).